The chain runs to 432 residues: Short/branched chain specific acyl-CoA dehydrogenase, mitochondrial (432 aa).

The N-terminal 33 residues, 1–33, are a transit peptide targeting the mitochondrion; the sequence is MAVSAFQLWRAGGLLRRNFLTHSSSWKIPPRVL. The residue at position 70 (K70) is an N6-acetyllysine; alternate. Position 70 is an N6-succinyllysine; alternate (K70). FAD-binding positions include 174–183 and 207–209; these read FCLSEAGAGS and WIS. A substrate-binding site is contributed by S183. At S183 the chain carries Phosphoserine. Y229 is a binding site for substrate. At K278 the chain carries N6-succinyllysine. Y283 contacts substrate. K284 bears the N6-acetyllysine; alternate mark. K284 carries the post-translational modification N6-succinyllysine; alternate. Residue 291–294 coordinates substrate; sequence NEGR. Residues R319, Q330, and 387 to 391 each bind FAD; that span reads EWMGG. E414 acts as the Proton acceptor in catalysis. 416-418 contacts FAD; it reads TSN. At K426 the chain carries N6-acetyllysine.

Belongs to the acyl-CoA dehydrogenase family. In terms of assembly, homotetramer. The cofactor is FAD. As to expression, ubiquitously expressed.

The protein resides in the mitochondrion matrix. The catalysed reaction is 2-methylbutanoyl-CoA + oxidized [electron-transfer flavoprotein] + H(+) = (2E)-2-methylbut-2-enoyl-CoA + reduced [electron-transfer flavoprotein]. It catalyses the reaction (2S)-2-methylbutanoyl-CoA + oxidized [electron-transfer flavoprotein] + H(+) = (2E)-2-methylbut-2-enoyl-CoA + reduced [electron-transfer flavoprotein]. The enzyme catalyses (2R)-2-methylbutanoyl-CoA + oxidized [electron-transfer flavoprotein] + H(+) = ethylacryloyl-CoA + reduced [electron-transfer flavoprotein]. It carries out the reaction butanoyl-CoA + oxidized [electron-transfer flavoprotein] + H(+) = (2E)-butenoyl-CoA + reduced [electron-transfer flavoprotein]. The catalysed reaction is 2-methylpropanoyl-CoA + oxidized [electron-transfer flavoprotein] + H(+) = 2-methylpropenoyl-CoA + reduced [electron-transfer flavoprotein]. It catalyses the reaction hexanoyl-CoA + oxidized [electron-transfer flavoprotein] + H(+) = (2E)-hexenoyl-CoA + reduced [electron-transfer flavoprotein]. The enzyme catalyses valproyl-CoA + oxidized [electron-transfer flavoprotein] + H(+) = (2E)-2-propylpent-2-enoyl-CoA + reduced [electron-transfer flavoprotein]. The protein operates within lipid metabolism; mitochondrial fatty acid beta-oxidation. It participates in amino-acid degradation; L-isoleucine degradation. Inhibited by N-ethylmaleimide, hydroxymercuribenzoate, methyl mercury iodide and heavy metals such as Hg2+, Cu2+, and Ag2+. Its function is as follows. Short and branched chain specific acyl-CoA dehydrogenase that catalyzes the removal of one hydrogen from C-2 and C-3 of the fatty acyl-CoA thioester, resulting in the formation of trans-2-enoyl-CoA. Among the different mitochondrial acyl-CoA dehydrogenases, acts specifically on short and branched chain acyl-CoA derivatives such as (S)-2-methylbutyryl-CoA as well as short straight chain acyl-CoAs such as butyryl-CoA. Plays an important role in the metabolism of L-isoleucine by catalyzing the dehydrogenation of 2-methylbutyryl-CoA, one of the steps of the L-isoleucine catabolic pathway. Can also act on valproyl-CoA, a metabolite of the valproic acid drug. In Rattus norvegicus (Rat), this protein is Short/branched chain specific acyl-CoA dehydrogenase, mitochondrial.